A 366-amino-acid chain; its full sequence is DNA replication and repair protein RecF (366 aa).

Residue 30–37 (GRNAQGKT) participates in ATP binding.

Belongs to the RecF family.

The protein localises to the cytoplasm. The RecF protein is involved in DNA metabolism; it is required for DNA replication and normal SOS inducibility. RecF binds preferentially to single-stranded, linear DNA. It also seems to bind ATP. The polypeptide is DNA replication and repair protein RecF (Streptococcus thermophilus (strain CNRZ 1066)).